The primary structure comprises 301 residues: Homoserine O-acetyltransferase (301 aa).

Cys-142 serves as the catalytic Acyl-thioester intermediate. Substrate-binding residues include Lys-163 and Ser-192. His-235 serves as the catalytic Proton acceptor. Residue Glu-237 is part of the active site. Position 249 (Arg-249) interacts with substrate.

This sequence belongs to the MetA family.

The protein localises to the cytoplasm. It catalyses the reaction L-homoserine + acetyl-CoA = O-acetyl-L-homoserine + CoA. It participates in amino-acid biosynthesis; L-methionine biosynthesis via de novo pathway; O-acetyl-L-homoserine from L-homoserine: step 1/1. In terms of biological role, transfers an acetyl group from acetyl-CoA to L-homoserine, forming acetyl-L-homoserine. The polypeptide is Homoserine O-acetyltransferase (Bacillus cereus (strain B4264)).